A 78-amino-acid chain; its full sequence is Large ribosomal subunit protein uL24 (78 aa).

This sequence belongs to the universal ribosomal protein uL24 family. As to quaternary structure, part of the 50S ribosomal subunit.

In terms of biological role, one of two assembly initiator proteins, it binds directly to the 5'-end of the 23S rRNA, where it nucleates assembly of the 50S subunit. One of the proteins that surrounds the polypeptide exit tunnel on the outside of the subunit. The protein is Large ribosomal subunit protein uL24 of Helicobacter hepaticus (strain ATCC 51449 / 3B1).